The primary structure comprises 62 residues: DNA-binding protein 7 (62 aa).

It belongs to the 7 kDa DNA-binding/endoribonuclease P2 family. As to quaternary structure, monomer.

It is found in the cytoplasm. Functionally, can constrain negative DNA supercoils. May be involved in maintaining the integrity of the genome at high temperature. This Metallosphaera cuprina (strain Ar-4) protein is DNA-binding protein 7.